The chain runs to 1221 residues: Phosphoenolpyruvate carboxylase 2 (1221 aa).

His156 is a catalytic residue. Disordered regions lie at residues 443–588 and 642–661; these read TAAE…DPTF and REPA…GGGG. 2 stretches are compositionally biased toward low complexity: residues 503–513 and 550–564; these read TTTATAAAAAA and PFRE…TAAS. Gly residues-rich tracts occupy residues 565 to 575 and 648 to 661; these read GGAGGGGGGGA and AHGG…GGGG. The active site involves Lys886.

Belongs to the PEPCase type 1 family. Mg(2+) is required as a cofactor.

The protein localises to the cytoplasm. It catalyses the reaction oxaloacetate + phosphate = phosphoenolpyruvate + hydrogencarbonate. Its function is as follows. Through the carboxylation of phosphoenolpyruvate (PEP) it forms oxaloacetate, a four-carbon dicarboxylic acid source for the tricarboxylic acid cycle. In Chlamydomonas reinhardtii (Chlamydomonas smithii), this protein is Phosphoenolpyruvate carboxylase 2.